A 2694-amino-acid chain; its full sequence is Teneurin-3 (2694 aa).

3 disordered regions span residues Met1–Glu45, Pro106–Ser132, and Thr161–Thr198. A Teneurin N-terminal domain is found at Met1 to Cys306. The Cytoplasmic portion of the chain corresponds to Met1–Met312. Residues Pro163–Leu184 are compositionally biased toward polar residues. Residues Ala313–Leu333 traverse the membrane as a helical segment. At Asn334–Arg2694 the chain is on the extracellular side. 2 N-linked (GlcNAc...) asparagine glycosylation sites follow: Asn374 and Asn413. 8 EGF-like domains span residues Thr508–Ser539, Arg540–Asp570, Pro572–Glu604, Glu605–Glu636, Leu638–Ser671, Ile672–Leu703, Lys704–Thr733, and Val734–Asp768. Cystine bridges form between Cys512-Cys522, Cys516-Cys527, Cys529-Cys538, Cys547-Cys558, Cys560-Cys569, Cys576-Cys587, Cys581-Cys592, Cys594-Cys603, Cys608-Cys619, Cys613-Cys624, Cys626-Cys635, Cys646-Cys659, Cys661-Cys670, Cys675-Cys685, Cys679-Cys690, Cys692-Cys701, Cys706-Cys716, Cys710-Cys721, Cys723-Cys732, Cys737-Cys747, Cys741-Cys756, and Cys758-Cys767. A glycan (N-linked (GlcNAc...) asparagine) is linked at Asn664. Residues Asn854, Asn877, and Asn1048 are each glycosylated (N-linked (GlcNAc...) asparagine). 5 NHL repeats span residues Leu1166–Phe1192, Ser1194–Leu1238, Ala1264–Ile1308, Cys1325–Asn1365, and Cys1452–Asn1495. The N-linked (GlcNAc...) asparagine glycan is linked to Asn1196. The YD 1 repeat unit spans residues Phe1505 to His1524. 2 N-linked (GlcNAc...) asparagine glycosylation sites follow: Asn1521 and Asn1538. YD repeat units follow at residues Tyr1541 to Arg1561, Tyr1604 to Phe1623, and Tyr1624 to Ile1646. N-linked (GlcNAc...) asparagine glycans are attached at residues Asn1634, Asn1671, Asn1729, and Asn1814. 18 YD repeats span residues Tyr1817–Glu1836, Tyr1858–Asp1876, Tyr1877–Gln1897, Tyr1904–Asp1921, Tyr1922–Lys1943, Tyr1944–Ser1961, Tyr1964–Ser1984, Tyr1987–Val2007, Tyr2015–Pro2034, Phe2040–Tyr2057, Tyr2058–Ile2084, Tyr2086–Gln2099, Tyr2100–Gly2123, Tyr2126–Asn2146, Tyr2147–Leu2167, Tyr2169–Gly2189, Tyr2201–Tyr2221, and Tyr2223–Phe2243. An N-linked (GlcNAc...) asparagine glycan is attached at Asn1915. A glycan (N-linked (GlcNAc...) asparagine) is linked at Asn2118. Asn2258 carries an N-linked (GlcNAc...) asparagine glycan. A YD 23 repeat occupies Tyr2269 to Val2310. The N-linked (GlcNAc...) asparagine glycan is linked to Asn2571.

It belongs to the tenascin family. Teneurin subfamily. In terms of assembly, homodimer; disulfide-linked; to mediate homophilic cell adhesion. In terms of tissue distribution, expressed by retinal ganglion cells and their presynaptic amacrine and postsynaptic tectal cell targets.

It localises to the cell membrane. The protein localises to the cell projection. Its subcellular location is the axon. Involved in neural development by regulating the establishment of proper connectivity within the nervous system. Acts in both pre- and postsynaptic neurons in the hippocampus to control the assembly of a precise topographic projection: required in both CA1 and subicular neurons for the precise targeting of proximal CA1 axons to distal subiculum, probably by promoting homophilic cell adhesion. Required by retinal ganglion cells for acquisition of their correct morphological and functional connectivity, thereby playing a key role in the development of the visual pathway. The sequence is that of Teneurin-3 (tenm3) from Danio rerio (Zebrafish).